Here is a 344-residue protein sequence, read N- to C-terminus: Small ribosomal subunit protein uS3 (344 aa).

A KH type-2 domain is found at 38 to 106 (LKAALRERLK…EVFIDIQEVH (69 aa)). Residues 217 to 344 (PEPEPRREQR…QKPEGSGENQ (128 aa)) form a disordered region. Basic and acidic residues-rich tracts occupy residues 219 to 259 (PEPR…RGDR) and 335 to 344 (QKPEGSGENQ).

It belongs to the universal ribosomal protein uS3 family. In terms of assembly, part of the 30S ribosomal subunit. Forms a tight complex with proteins S10 and S14.

Functionally, binds the lower part of the 30S subunit head. Binds mRNA in the 70S ribosome, positioning it for translation. The protein is Small ribosomal subunit protein uS3 of Solibacter usitatus (strain Ellin6076).